A 333-amino-acid chain; its full sequence is Holliday junction branch migration complex subunit RuvB (333 aa).

Residues 1-182 (MEERLVSGEV…FGVISRLEYY (182 aa)) are large ATPase domain (RuvB-L). Residues Leu21, Arg22, Gly63, Lys66, Thr67, Thr68, 129–131 (EDY), Arg172, Tyr182, and Arg219 each bind ATP. A Mg(2+)-binding site is contributed by Thr67. Residues 183 to 253 (HVDQLAQIIE…LAVEALERLQ (71 aa)) form a small ATPAse domain (RuvB-S) region. A head domain (RuvB-H) region spans residues 256-333 (RLGLDQIDHK…THLGMEVPKR (78 aa)). Positions 311 and 316 each coordinate DNA.

This sequence belongs to the RuvB family. Homohexamer. Forms an RuvA(8)-RuvB(12)-Holliday junction (HJ) complex. HJ DNA is sandwiched between 2 RuvA tetramers; dsDNA enters through RuvA and exits via RuvB. An RuvB hexamer assembles on each DNA strand where it exits the tetramer. Each RuvB hexamer is contacted by two RuvA subunits (via domain III) on 2 adjacent RuvB subunits; this complex drives branch migration. In the full resolvosome a probable DNA-RuvA(4)-RuvB(12)-RuvC(2) complex forms which resolves the HJ.

The protein resides in the cytoplasm. The enzyme catalyses ATP + H2O = ADP + phosphate + H(+). Its function is as follows. The RuvA-RuvB-RuvC complex processes Holliday junction (HJ) DNA during genetic recombination and DNA repair, while the RuvA-RuvB complex plays an important role in the rescue of blocked DNA replication forks via replication fork reversal (RFR). RuvA specifically binds to HJ cruciform DNA, conferring on it an open structure. The RuvB hexamer acts as an ATP-dependent pump, pulling dsDNA into and through the RuvAB complex. RuvB forms 2 homohexamers on either side of HJ DNA bound by 1 or 2 RuvA tetramers; 4 subunits per hexamer contact DNA at a time. Coordinated motions by a converter formed by DNA-disengaged RuvB subunits stimulates ATP hydrolysis and nucleotide exchange. Immobilization of the converter enables RuvB to convert the ATP-contained energy into a lever motion, pulling 2 nucleotides of DNA out of the RuvA tetramer per ATP hydrolyzed, thus driving DNA branch migration. The RuvB motors rotate together with the DNA substrate, which together with the progressing nucleotide cycle form the mechanistic basis for DNA recombination by continuous HJ branch migration. Branch migration allows RuvC to scan DNA until it finds its consensus sequence, where it cleaves and resolves cruciform DNA. The polypeptide is Holliday junction branch migration complex subunit RuvB (Geobacillus kaustophilus (strain HTA426)).